We begin with the raw amino-acid sequence, 657 residues long: Autophagy-related protein 22 (657 aa).

The span at 1–15 (MAPNLQPQPQSQLQR) shows a compositional bias: low complexity. Positions 1 to 78 (MAPNLQPQPQ…VVPRHFGHDA (78 aa)) are disordered. Topologically, residues 1-91 (MAPNLQPQPQ…SRRELLGWYA (91 aa)) are cytoplasmic. Residues 26–40 (GLSNISKRSFRSCAT) are compositionally biased toward polar residues. A helical membrane pass occupies residues 92-112 (YAFAAETYVICGIASFIPILL). At 113–155 (ETLARENGVLVSDRKTPCGSSDSKNDGDGQCIVWVFGMEINTA) the chain is on the vacuolar side. The chain crosses the membrane as a helical span at residues 156–176 (SFAMYTFSVSVLVQALLVVSI). Over 177 to 187 (SCAADHGNYRK) the chain is Cytoplasmic. The chain crosses the membrane as a helical span at residues 188–208 (KLLLTFAWIGSFAVMSYIFIT). At 209-212 (KDNY) the chain is on the vacuolar side. A helical membrane pass occupies residues 213 to 233 (ILGALLTVISNTSFGASFVLL). Residues 234–317 (NSFLPLLVRY…ELELSTRISA (84 aa)) are Cytoplasmic-facing. A helical transmembrane segment spans residues 318–338 (IGIGTGYIAALFLQCICIGVL). The Vacuolar segment spans residues 339 to 349 (ISLHNTTWGQR). The N-linked (GlcNAc...) asparagine glycan is linked to Asn-343. Residues 350 to 370 (VVLFMVGVWWTVFTIPAAMWL) form a helical membrane-spanning segment. The Cytoplasmic portion of the chain corresponds to 371-384 (RPRPGPPLADNGRK). Residues 385–405 (GIMAGLAYILYAWKSLFKTIQ) traverse the membrane as a helical segment. The Vacuolar portion of the chain corresponds to 406-409 (QARR). A helical membrane pass occupies residues 410 to 430 (LLDIVLFLAGWFLLSDAIATT). At 431–446 (SSTAILFAKTQLHMKP) the chain is on the cytoplasmic side. A helical membrane pass occupies residues 447–467 (WALGMINVISTTAGVFGAFGW). Over 468–481 (SWVSRLFNLKAHQT) the chain is Vacuolar. Residues 482–502 (ILVCIALFELIPLYGLLGYLP) traverse the membrane as a helical segment. Over 503–515 (FVKNWGVFGLQQP) the chain is Cytoplasmic. The helical transmembrane segment at 516–536 (WEMYPLAAVYGVVLGGLSGYC) threads the bilayer. Topologically, residues 537 to 554 (RSLYGELIPPGSEAAFYA) are vacuolar. Residues 555–575 (LYAITDKGSSVFGPTIVGAII) form a helical membrane-spanning segment. Over 576–583 (DRTGTIRP) the chain is Cytoplasmic. The chain crosses the membrane as a helical span at residues 584–604 (AFWFLAVLVGFPAPLIWFIDV). Over 605-657 (ERGRREGAKLAKSITDSIVQEEDESDDGAERRGMLSDYEREHGQSIDDERAGR) the chain is Vacuolar. The segment at 615–657 (AKSITDSIVQEEDESDDGAERRGMLSDYEREHGQSIDDERAGR) is disordered. Basic and acidic residues predominate over residues 632–657 (GAERRGMLSDYEREHGQSIDDERAGR).

This sequence belongs to the ATG22 family.

The protein localises to the vacuole membrane. In terms of biological role, vacuolar effluxer which mediate the efflux of leucine and other amino acids resulting from autophagic degradation. The release of autophagic amino acids allows the maintenance of protein synthesis and viability during nitrogen starvation. Autophagy is required for proper vegetative growth, asexual/sexual reproduction, and full virulence. Autophagy is particularly involved in the biosynthesis of deoxynivalenol (DON), an important virulence determinant. The chain is Autophagy-related protein 22 from Gibberella zeae (strain ATCC MYA-4620 / CBS 123657 / FGSC 9075 / NRRL 31084 / PH-1) (Wheat head blight fungus).